Reading from the N-terminus, the 70-residue chain is Small ribosomal subunit protein bS18c (70 aa).

This sequence belongs to the bacterial ribosomal protein bS18 family. As to quaternary structure, part of the 30S ribosomal subunit.

The protein localises to the plastid. Its subcellular location is the chloroplast. The chain is Small ribosomal subunit protein bS18c from Gracilaria tenuistipitata var. liui (Red alga).